A 103-amino-acid polypeptide reads, in one-letter code: UPF0473 protein LCA_0390 (103 aa).

Belongs to the UPF0473 family.

This is UPF0473 protein LCA_0390 from Latilactobacillus sakei subsp. sakei (strain 23K) (Lactobacillus sakei subsp. sakei).